A 974-amino-acid polypeptide reads, in one-letter code: Protein bicaudal C homolog 1 (974 aa).

The segment at 1 to 50 is disordered; it reads MAAQGEPGYLAAQSDPGSNSERSTDSPVPGSEDDLVAGATLHSPEWSEER. Phosphoserine occurs at positions 26, 31, and 43. 2 consecutive KH domains span residues 132 to 199 and 284 to 348; these read RVTL…RVRI and PVST…RQYL. Lys-398 is modified (N6-acetyllysine). Phosphoserine is present on residues Ser-576, Ser-612, and Ser-679. Disordered stretches follow at residues 593–644, 665–719, and 783–846; these read VLSA…GDLK, GTKN…HLAP, and YKPT…KSTE. Residues 602–619 show a composition bias toward polar residues; it reads SIQTSGSEQTSPKSSPTE. Basic and acidic residues predominate over residues 690-703; the sequence is LADKKAPGSERAAE. One can recognise an SAM domain in the interval 873–936; sequence FKGSDLPELF…LLAISELNKN (64 aa).

This sequence belongs to the BicC family. In terms of assembly, interacts (via KH domains) with ANKS6 (via SAM domain) in an RNA-dependent manner. Interacts with ANKS3.

It is found in the cytoplasm. Its function is as follows. Putative RNA-binding protein. Acts as a negative regulator of Wnt signaling. May be involved in regulating gene expression during embryonic development. This Homo sapiens (Human) protein is Protein bicaudal C homolog 1 (BICC1).